Reading from the N-terminus, the 512-residue chain is Maturase K (512 aa).

This sequence belongs to the intron maturase 2 family. MatK subfamily.

It localises to the plastid. It is found in the chloroplast. In terms of biological role, usually encoded in the trnK tRNA gene intron. Probably assists in splicing its own and other chloroplast group II introns. This chain is Maturase K, found in Amorphophallus paeoniifolius (Whitespot giant arum).